A 73-amino-acid chain; its full sequence is Translation initiation factor IF-1 (73 aa).

The region spanning M1–R72 is the S1-like domain.

The protein belongs to the IF-1 family. Component of the 30S ribosomal translation pre-initiation complex which assembles on the 30S ribosome in the order IF-2 and IF-3, IF-1 and N-formylmethionyl-tRNA(fMet); mRNA recruitment can occur at any time during PIC assembly.

Its subcellular location is the cytoplasm. In terms of biological role, one of the essential components for the initiation of protein synthesis. Stabilizes the binding of IF-2 and IF-3 on the 30S subunit to which N-formylmethionyl-tRNA(fMet) subsequently binds. Helps modulate mRNA selection, yielding the 30S pre-initiation complex (PIC). Upon addition of the 50S ribosomal subunit IF-1, IF-2 and IF-3 are released leaving the mature 70S translation initiation complex. The polypeptide is Translation initiation factor IF-1 (Gloeobacter violaceus (strain ATCC 29082 / PCC 7421)).